The chain runs to 505 residues: ATP synthase subunit alpha (505 aa).

An ATP-binding site is contributed by 170–177 (GDRQTGKT).

It belongs to the ATPase alpha/beta chains family. As to quaternary structure, F-type ATPases have 2 components, CF(1) - the catalytic core - and CF(0) - the membrane proton channel. CF(1) has five subunits: alpha(3), beta(3), gamma(1), delta(1), epsilon(1). CF(0) has four main subunits: a(1), b(1), b'(1) and c(9-12).

The protein resides in the cellular thylakoid membrane. It catalyses the reaction ATP + H2O + 4 H(+)(in) = ADP + phosphate + 5 H(+)(out). Functionally, produces ATP from ADP in the presence of a proton gradient across the membrane. The alpha chain is a regulatory subunit. This is ATP synthase subunit alpha from Synechococcus elongatus (strain ATCC 33912 / PCC 7942 / FACHB-805) (Anacystis nidulans R2).